The primary structure comprises 626 residues: 4-hydroxy-3-methylbut-2-en-1-yl diphosphate synthase (flavodoxin) (626 aa).

The [4Fe-4S] cluster site is built by Cys521, Cys524, Cys555, and Glu562.

This sequence belongs to the IspG family. [4Fe-4S] cluster is required as a cofactor.

It carries out the reaction (2E)-4-hydroxy-3-methylbut-2-enyl diphosphate + oxidized [flavodoxin] + H2O + 2 H(+) = 2-C-methyl-D-erythritol 2,4-cyclic diphosphate + reduced [flavodoxin]. It participates in isoprenoid biosynthesis; isopentenyl diphosphate biosynthesis via DXP pathway; isopentenyl diphosphate from 1-deoxy-D-xylulose 5-phosphate: step 5/6. In terms of biological role, converts 2C-methyl-D-erythritol 2,4-cyclodiphosphate (ME-2,4cPP) into 1-hydroxy-2-methyl-2-(E)-butenyl 4-diphosphate. The protein is 4-hydroxy-3-methylbut-2-en-1-yl diphosphate synthase (flavodoxin) of Bacteroides fragilis (strain YCH46).